We begin with the raw amino-acid sequence, 338 residues long: Glycerol-3-phosphate dehydrogenase [NAD(P)+] (338 aa).

Residues serine 13, tryptophan 14, and lysine 108 each coordinate NADPH. Sn-glycerol 3-phosphate is bound by residues lysine 108, glycine 139, and serine 141. Alanine 143 lines the NADPH pocket. Sn-glycerol 3-phosphate contacts are provided by lysine 194, aspartate 247, serine 257, arginine 258, and asparagine 259. Lysine 194 functions as the Proton acceptor in the catalytic mechanism. Residue arginine 258 participates in NADPH binding. Residues valine 282 and glutamate 284 each coordinate NADPH.

This sequence belongs to the NAD-dependent glycerol-3-phosphate dehydrogenase family.

It localises to the cytoplasm. The enzyme catalyses sn-glycerol 3-phosphate + NAD(+) = dihydroxyacetone phosphate + NADH + H(+). It catalyses the reaction sn-glycerol 3-phosphate + NADP(+) = dihydroxyacetone phosphate + NADPH + H(+). It participates in membrane lipid metabolism; glycerophospholipid metabolism. Functionally, catalyzes the reduction of the glycolytic intermediate dihydroxyacetone phosphate (DHAP) to sn-glycerol 3-phosphate (G3P), the key precursor for phospholipid synthesis. The chain is Glycerol-3-phosphate dehydrogenase [NAD(P)+] from Listeria innocua serovar 6a (strain ATCC BAA-680 / CLIP 11262).